Reading from the N-terminus, the 213-residue chain is Bcl-2-related ovarian killer protein (213 aa).

A Phosphoserine modification is found at Ser7. The segment at Met15–Arg45 is interactions with ITPR1. Residues Lys25 and Lys32 each participate in a glycyl lysine isopeptide (Lys-Gly) (interchain with G-Cter in ubiquitin) cross-link. A BH4 motif is present at residues Lys32–Leu44. The BH3 motif lies at Val67 to Pro83. Residues Leu71 to Glu79 form a nuclear export signal region. The short motif at His113–Ala132 is the BH1 element. Residues Lys160 and Lys177 each participate in a glycyl lysine isopeptide (Lys-Gly) (interchain with G-Cter in ubiquitin) cross-link. The BH2 signature appears at Trp165 to Val179. The chain crosses the membrane as a helical span at residues Trp190 to Leu210.

The protein belongs to the Bcl-2 family. Monomer; positively regulates apoptotic process. Homodimer. Heterodimer. Oligomer; promoted by apoptotic stimuli and BH3-only proteins; mediates constitutive activation. Interacts (via BH4 domain) with ITPR1; enhances BOK expression and stabilization; limits apoptosis and prevents ubiquitination and then degradation; protects ITPR1 from proteolysis by CASP3 during apoptosis. Interacts with ITPR2 and ITPR3; binds most strongly to ITPR2, and barely to ITPR3; regulates their expression. Interacts with XPO1; translocates to the cytoplasm. Interacts with BNIP3; promotes oligomerization. In terms of processing, ubiquitinated by AMFR/gp78 E3 ubiquitin ligase complex; mediates degradation by ubiquitin-proteasome pathway in a VCP/p97-dependent manner; prevents from proapoptotic activity; promotes degradation of newly synthesized proteins that are not ITPR1 associated. In terms of tissue distribution, widely expressed. Highly expressed in brain, kidney, and spleen.

It localises to the mitochondrion membrane. It is found in the endoplasmic reticulum membrane. The protein resides in the mitochondrion inner membrane. The protein localises to the cytoplasm. Its subcellular location is the nucleus. It localises to the mitochondrion. It is found in the endoplasmic reticulum. The protein resides in the mitochondrion outer membrane. The protein localises to the early endosome membrane. Its subcellular location is the recycling endosome membrane. It localises to the nucleus outer membrane. It is found in the golgi apparatus. The protein resides in the cis-Golgi network membrane. The protein localises to the trans-Golgi network membrane. Its subcellular location is the membrane. Apoptosis regulator that functions through different apoptotic signaling pathways. Plays a roles as pro-apoptotic protein that positively regulates intrinsic apoptotic process in a BAX- and BAK1-dependent manner or in a BAX- and BAK1-independent manner. In response to endoplasmic reticulum stress promotes mitochondrial apoptosis through downstream BAX/BAK1 activation and positive regulation of PERK-mediated unfolded protein response. Activates apoptosis independently of heterodimerization with survival-promoting BCL2 and BCL2L1 through induction of mitochondrial outer membrane permeabilization, in a BAX- and BAK1-independent manner, in response to inhibition of ERAD-proteasome degradation system, resulting in cytochrome c release. In response to DNA damage, mediates intrinsic apoptotic process in a TP53-dependent manner. Plays a role in granulosa cell apoptosis by CASP3 activation. Plays a roles as anti-apoptotic protein during neuronal apoptotic process, by negatively regulating poly ADP-ribose polymerase-dependent cell death through regulation of neuronal calcium homeostasis and mitochondrial bioenergetics in response to NMDA excitation. In addition to its role in apoptosis, may regulate trophoblast cell proliferation during the early stages of placental development, by acting on G1/S transition through regulation of CCNE1 expression. May also play a role as an inducer of autophagy by disrupting interaction between MCL1 and BECN1. In Mus musculus (Mouse), this protein is Bcl-2-related ovarian killer protein.